The sequence spans 461 residues: ATP synthase subunit beta (461 aa).

An ATP-binding site is contributed by 151 to 158 (GGAGVGKT).

It belongs to the ATPase alpha/beta chains family. As to quaternary structure, F-type ATPases have 2 components, CF(1) - the catalytic core - and CF(0) - the membrane proton channel. CF(1) has five subunits: alpha(3), beta(3), gamma(1), delta(1), epsilon(1). CF(0) has three main subunits: a(1), b(2) and c(9-12). The alpha and beta chains form an alternating ring which encloses part of the gamma chain. CF(1) is attached to CF(0) by a central stalk formed by the gamma and epsilon chains, while a peripheral stalk is formed by the delta and b chains.

It localises to the cell inner membrane. The catalysed reaction is ATP + H2O + 4 H(+)(in) = ADP + phosphate + 5 H(+)(out). In terms of biological role, produces ATP from ADP in the presence of a proton gradient across the membrane. The catalytic sites are hosted primarily by the beta subunits. This Idiomarina loihiensis (strain ATCC BAA-735 / DSM 15497 / L2-TR) protein is ATP synthase subunit beta.